A 331-amino-acid chain; its full sequence is 2-keto-3-deoxygluconate permease (331 aa).

10 consecutive transmembrane segments (helical) span residues 10 to 30 (IPGGMMLVPLVLGAILNTLAP), 42 to 62 (GMISGTVPILAVWFFCIGASI), 77 to 97 (LVLTKIAVAWVVAMGCAMFIP), 100 to 120 (GIQTGFFAGLSVLAIVSAMDM), 141 to 161 (AFVLMSLESGPLVTMLILGSA), 163 to 183 (LASFEPHHFVGAVLPFLIGFA), 200 to 220 (PVLIPFFGFALGNTINLNVIM), 224 to 244 (LLGIVLGVAVIIITGIPLIIA), 254 to 274 (TAGVAASSAAGAAVANPMIIA), and 289 to 309 (ALVAASVIVTAILVPIITALY).

Belongs to the KdgT transporter family.

Its subcellular location is the cell inner membrane. It catalyses the reaction 2-dehydro-3-deoxy-D-gluconate(in) + H(+)(in) = 2-dehydro-3-deoxy-D-gluconate(out) + H(+)(out). Functionally, catalyzes the proton-dependent uptake of 2-keto-3-deoxygluconate (KDG) into the cell. This is 2-keto-3-deoxygluconate permease from Enterobacter sp. (strain 638).